The following is a 238-amino-acid chain: Complement C1q-like protein 4 (238 aa).

The first 15 residues, 1–15 (MVLLLLVAIPLLVHS), serve as a signal peptide directing secretion. The tract at residues 37–102 (SRGQGPDGAP…PGPGPGGAAP (66 aa)) is disordered. The region spanning 53-96 (PPGAKGEVGRRGKAGLRGPPGPPGPRGPPGEPGRPGPPGPPGPG) is the Collagen-like domain. Pro residues predominate over residues 71–96 (PPGPPGPRGPPGEPGRPGPPGPPGPG). The region spanning 105–238 (GYVPRIAFYA…TFSGFIIYPD (134 aa)) is the C1q domain.

As to quaternary structure, forms homooligomers, predominantly dimers or trimers. Forms heterooligomers with C1QL1, C1QL2 and C1QL3, when proteins are coexpressed; this interaction does not occur after secretion. Interacts with ADGRB3. Highly expressed in testis and adipose tissue, brown adipose tissue expressing higher levels than subcutaneous and visceral white adipose tissue. In gonadal fat pad, expressed at lower levels in adipocytes than in the stromal vascular fraction (VSP), which contains preadipocytes, fibroblasts, endothelial cells and occasional immune cells. Expression exhibits sexually dimorphism, with higher levels in females than in males.

Its subcellular location is the secreted. Functionally, may regulate the number of excitatory synapses that are formed on hippocampus neurons. Has no effect on inhibitory synapses. May inhibit adipocyte differentiation at an early stage of the process. This is Complement C1q-like protein 4 (C1ql4) from Mus musculus (Mouse).